The primary structure comprises 677 residues: Methionine--tRNA ligase (677 aa).

Positions 15–25 match the 'HIGH' region motif; that stretch reads PYANGSIHLGH. Zn(2+)-binding residues include cysteine 146, cysteine 149, cysteine 159, and cysteine 162. The 'KMSKS' region motif lies at 333-337; it reads KMSKS. An ATP-binding site is contributed by lysine 336. The 103-residue stretch at 575–677 folds into the tRNA-binding domain; the sequence is DFAKVDLRVA…AGAKPGHQVK (103 aa).

This sequence belongs to the class-I aminoacyl-tRNA synthetase family. MetG type 1 subfamily. As to quaternary structure, homodimer. The cofactor is Zn(2+).

The protein localises to the cytoplasm. It catalyses the reaction tRNA(Met) + L-methionine + ATP = L-methionyl-tRNA(Met) + AMP + diphosphate. Its function is as follows. Is required not only for elongation of protein synthesis but also for the initiation of all mRNA translation through initiator tRNA(fMet) aminoacylation. This Escherichia coli (strain SE11) protein is Methionine--tRNA ligase.